The sequence spans 1016 residues: Mediator of RNA polymerase II transcription subunit 5 (1016 aa).

Belongs to the Mediator complex subunit 5 family. In terms of assembly, component of the Mediator complex.

Its subcellular location is the nucleus. Component of the Mediator complex, a coactivator involved in the regulated transcription of nearly all RNA polymerase II-dependent genes. Mediator functions as a bridge to convey information from gene-specific regulatory proteins to the basal RNA polymerase II transcription machinery. Mediator is recruited to promoters by direct interactions with regulatory proteins and serves as a scaffold for the assembly of a functional preinitiation complex with RNA polymerase II and the general transcription factors. This chain is Mediator of RNA polymerase II transcription subunit 5 (nut1), found in Aspergillus terreus (strain NIH 2624 / FGSC A1156).